A 356-amino-acid polypeptide reads, in one-letter code: Chaperone protein DnaJ (356 aa).

Residues 5–69 (DYYQILGVSK…ERRKEYDRIL (65 aa)) form the J domain. Residues 121–197 (GCEKDIEYER…CSGRGRVAMH (77 aa)) form a CR-type zinc finger. Zn(2+) is bound by residues C134, C137, C151, C154, C171, C174, C185, and C188. 4 CXXCXGXG motif repeats span residues 134 to 141 (CPTCEGKG), 151 to 158 (CHACEGTG), 171 to 178 (CSVCKGRG), and 185 to 192 (CPACSGRG).

The protein belongs to the DnaJ family. Homodimer. Zn(2+) is required as a cofactor.

The protein resides in the cytoplasm. Participates actively in the response to hyperosmotic and heat shock by preventing the aggregation of stress-denatured proteins and by disaggregating proteins, also in an autonomous, DnaK-independent fashion. Unfolded proteins bind initially to DnaJ; upon interaction with the DnaJ-bound protein, DnaK hydrolyzes its bound ATP, resulting in the formation of a stable complex. GrpE releases ADP from DnaK; ATP binding to DnaK triggers the release of the substrate protein, thus completing the reaction cycle. Several rounds of ATP-dependent interactions between DnaJ, DnaK and GrpE are required for fully efficient folding. Also involved, together with DnaK and GrpE, in the DNA replication of plasmids through activation of initiation proteins. In Hydrogenobacter thermophilus (strain DSM 6534 / IAM 12695 / TK-6), this protein is Chaperone protein DnaJ.